A 250-amino-acid chain; its full sequence is MVSIMLLKVEDLHVYRGNREILKGVNLTVEENEIHAIIGPNGAGKSTLAYTIMGISGYKPTKGRIIFKGVDIIDKNITERARMGMTLAWQEPARFEGIKVKNYLMLGMNEKYKKDKEIAEEKIREALKLVNLDPDKYLDRYVDETLSGGERKRIELASIICMEPDLAILDEPDSGIDIVSFDEIKRVFDYLKDKGCSLLVITHREELAEHADRVSLICAGEVIKSGDPKEVGEFYKKECGKCYKKVPDGK.

One can recognise an ABC transporter domain in the interval 7-244 (LKVEDLHVYR…YKKECGKCYK (238 aa)). 39–46 (GPNGAGKS) is a binding site for ATP.

The protein belongs to the ABC transporter superfamily.

This is an uncharacterized protein from Methanocaldococcus jannaschii (strain ATCC 43067 / DSM 2661 / JAL-1 / JCM 10045 / NBRC 100440) (Methanococcus jannaschii).